We begin with the raw amino-acid sequence, 258 residues long: Glutamate racemase (258 aa).

Substrate contacts are provided by residues 11 to 12 (DS) and 43 to 44 (YG). C74 functions as the Proton donor/acceptor in the catalytic mechanism. A substrate-binding site is contributed by 75-76 (NT). C187 (proton donor/acceptor) is an active-site residue. 188 to 189 (TH) lines the substrate pocket.

The protein belongs to the aspartate/glutamate racemases family.

It catalyses the reaction L-glutamate = D-glutamate. Its pathway is cell wall biogenesis; peptidoglycan biosynthesis. Functionally, provides the (R)-glutamate required for cell wall biosynthesis. This Bifidobacterium adolescentis (strain ATCC 15703 / DSM 20083 / NCTC 11814 / E194a) protein is Glutamate racemase.